The following is a 207-amino-acid chain: uncharacterized protein (207 aa).

A YrdC-like domain is found at 14–201 (ARLINQAVEI…SPVILREGSG (188 aa)).

The protein belongs to the SUA5 family.

This is an uncharacterized protein from Haemophilus influenzae (strain ATCC 51907 / DSM 11121 / KW20 / Rd).